The following is a 356-amino-acid chain: Tyrosine recombinase XerS (356 aa).

Residues 16–121 (LMPWYVLEYY…ALSSLYKYLT (106 aa)) enclose the Core-binding (CB) domain. Positions 169–354 (GFLTYIDQEH…VNDEQKNALD (186 aa)) constitute a Tyr recombinase domain. Active-site residues include R210, K234, H306, R309, and H332. Y341 functions as the O-(3'-phospho-DNA)-tyrosine intermediate in the catalytic mechanism.

It belongs to the 'phage' integrase family. XerS subfamily.

The protein localises to the cytoplasm. Its activity is regulated as follows. FtsK is required for recombination. Its function is as follows. Site-specific tyrosine recombinase, which acts by catalyzing the cutting and rejoining of the recombining DNA molecules. Essential to convert dimers of the bacterial chromosome into monomers to permit their segregation at cell division. The chain is Tyrosine recombinase XerS from Streptococcus pneumoniae serotype 2 (strain D39 / NCTC 7466).